The following is a 490-amino-acid chain: 4-hydroxyphenylacetaldehyde synthase (490 aa).

The L-phenylalanine site is built by proline 97, histidine 198, and histidine 313. Lysine 314 carries the post-translational modification N6-(pyridoxal phosphate)lysine. Phenylalanine 343 contributes to the L-phenylalanine binding site.

The protein belongs to the group II decarboxylase family. As to quaternary structure, homodimer. It depends on pyridoxal 5'-phosphate as a cofactor.

The enzyme catalyses L-tyrosine + O2 + H2O + H(+) = (4-hydroxyphenyl)acetaldehyde + H2O2 + NH4(+) + CO2. Catalyzes the production of 4-hydroxyphenylacetaldehyde (HPAA) directly from L-tyrosine, tyramine not being formed as an intermediate. The chain is 4-hydroxyphenylacetaldehyde synthase from Rhodiola rosea (Roseroot).